Here is a 265-residue protein sequence, read N- to C-terminus: Putative 2-aminoethylphosphonate transport system permease protein PhnV (265 aa).

Helical transmembrane passes span 13-33 (GVVA…VILM), 69-89 (LTIG…AALA), 104-124 (VFYL…LVAF), 131-151 (MNGT…AFTF), 185-205 (LPLL…LSMG), and 233-253 (NIAD…LLMM). The region spanning 65–253 (LLASLTIGFC…LVAITLLLMM (189 aa)) is the ABC transmembrane type-1 domain.

It belongs to the binding-protein-dependent transport system permease family.

It is found in the cell inner membrane. Functionally, probably part of the PhnSTUV complex (TC 3.A.1.11.5) involved in 2-aminoethylphosphonate import. Probably responsible for the translocation of the substrate across the membrane. This chain is Putative 2-aminoethylphosphonate transport system permease protein PhnV (phnV), found in Salmonella choleraesuis (strain SC-B67).